A 1071-amino-acid polypeptide reads, in one-letter code: Exportin-1 (1071 aa).

The tract at residues 1–679 (MPAIMTMLAD…QQATKNVDIL (679 aa)) is necessary for HTLV-1 Rex-mediated mRNA export. Residues 46–112 (AQEVLTHLKE…KKYVVGLIIK (67 aa)) form the Importin N-terminal domain. HEAT repeat units lie at residues 217 to 240 (QNAP…PLGY), 241 to 277 (IFET…VSVS), 354 to 472 (MLLV…YVDT), 515 to 553 (RFLV…QYPR), 560 to 597 (KFLK…KCRR), and 602 to 639 (VQVG…AVGY). The tract at residues 327–450 (CTFLKEHDQL…VREFMKDTDS (124 aa)) is interaction with Ran and nuclear export complex formation. S391 carries the post-translational modification Phosphoserine. Residues 411 to 414 (PMLF) are necessary for HTLV-1 Rex multimerization. The tract at residues 411 to 481 (PMLFKVRLLM…TERIMTEKLH (71 aa)) is interaction with RANBP3. At K446 the chain carries N6-acetyllysine. T448 bears the Phosphothreonine mark. Phosphoserine is present on S450. Y454 is subject to Phosphotyrosine. At K693 the chain carries N6-acetyllysine. 4 HEAT repeats span residues 775–813 (NFVP…KLGG), 885–916 (TMRN…SFYQ), 917–954 (TYFC…NLVE), and 1002–1039 (FSLN…EERE). The interaction with HIV-1 Rev stretch occupies residues 800–820 (VLSTMAIIVNKLGGHITAEIP). S1031 bears the Phosphoserine mark.

This sequence belongs to the exportin family. In terms of assembly, found in a U snRNA export complex with PHAX/RNUXA, NCBP1/CBP80, NCBP2/CBP20, RAN, XPO1 and m7G-capped RNA. Component of a nuclear export receptor complex composed of KPNB1, RAN, SNUPN and XPO1. Found in a trimeric export complex with SNUPN, RAN and XPO1. Found in a nuclear export complex with RANBP3 and RAN. Found in a 60S ribosomal subunit export complex with NMD3, RAN, XPO1. Interacts with DDX3X, NMD3, NUP42, NUP88, NUP214, RANBP3 and TERT. Interacts with NEMF (via its N-terminus). Interacts with the monomeric form of BIRC5/survivin deacetylated at 'Lys-129'. Interacts with DTNBP1 and SERTAD2; the interactions translocate DTNBP1 and SERTAD2 out of the nucleus. Interacts with ATF2. Interacts with SLC35G1 and STIM1. Interacts with DCAF8. Interacts with CPEB3. Interacts with HAX1. Interacts with BOK; translocates to the cytoplasm. Interacts with HSP90AB1. Interacts with LRPPRC; interacts with LRPPRC alone and also when LRPPRC is in complex with EIF4E and with EIF4E sensitivity element (4ESE)-containing mRNAs to form an EIF4E-dependent mRNA export complex. (Microbial infection) Interacts with HIV-1 Rev. As to quaternary structure, (Microbial infection) Interacts with HTLV-1 Rex. In terms of assembly, (Microbial infection) Interacts with influenza A nucleoprotein. (Microbial infection) Interacts with Epstein-Barr virus protein BMLF1. As to quaternary structure, (Microbial infection) Part of a tetrameric complex composed of CRM1, importin alpha/beta dimer and the Venezuelan equine encephalitis virus (VEEV) capsid; this complex blocks the receptor-mediated transport through the nuclear pore. In terms of assembly, (Microbial infection) Interacts with SARS-CoV virus protein ORF9b; this interaction mediates protein ORF9b export out of the nucleus. As to expression, expressed in heart, brain, placenta, lung, liver, skeletal muscle, pancreas, spleen, thymus, prostate, testis, ovary, small intestine, colon and peripheral blood leukocytes. Not expressed in the kidney.

The protein resides in the cytoplasm. The protein localises to the nucleus. Its subcellular location is the nucleoplasm. It localises to the cajal body. It is found in the nucleolus. Functionally, mediates the nuclear export of cellular proteins (cargos) bearing a leucine-rich nuclear export signal (NES) and of RNAs. In the nucleus, in association with RANBP3, binds cooperatively to the NES on its target protein and to the GTPase RAN in its active GTP-bound form (Ran-GTP). Docking of this complex to the nuclear pore complex (NPC) is mediated through binding to nucleoporins. Upon transit of a nuclear export complex into the cytoplasm, disassembling of the complex and hydrolysis of Ran-GTP to Ran-GDP (induced by RANBP1 and RANGAP1, respectively) cause release of the cargo from the export receptor. The directionality of nuclear export is thought to be conferred by an asymmetric distribution of the GTP- and GDP-bound forms of Ran between the cytoplasm and nucleus. Involved in U3 snoRNA transport from Cajal bodies to nucleoli. Binds to late precursor U3 snoRNA bearing a TMG cap. (Microbial infection) Mediates the export of unspliced or incompletely spliced RNAs out of the nucleus from different viruses including HIV-1, HTLV-1 and influenza A. Interacts with, and mediates the nuclear export of HIV-1 Rev and HTLV-1 Rex proteins. Involved in HTLV-1 Rex multimerization. This chain is Exportin-1 (XPO1), found in Homo sapiens (Human).